Reading from the N-terminus, the 304-residue chain is Recombination-associated protein RdgC (304 aa).

This sequence belongs to the RdgC family.

It localises to the cytoplasm. The protein localises to the nucleoid. May be involved in recombination. The chain is Recombination-associated protein RdgC from Shewanella baltica (strain OS185).